Here is a 405-residue protein sequence, read N- to C-terminus: MKNEVVYKQLTEKILPFWNAMRDDENGGFYGYMSEDLHIDDHADKGCILNSRILWFYSTAYMYLQDEKLLDNAKHAFEFLKTYCFDPMCGGIFWSVRYNGKPADTTKHTYNQAFAIYALSAYYEATGSIEAIAIAEIIYEKIEDTMRDTKGYLEAFTRDFRPADNDKLSENGVMAERTMNTLLHIIEAYSALVHALRKKVADPAKGDVRDELFMNVVENKLAAALELMRDKFYNSDRHRLDVFFDKEYESLIDLTSYGHDIEASWLLEWAAGILDDEEITESLHPISSDLVEKVYKEAFDGHSIVNECEDGDVNTDRIWWVEAESVLGFLKAFEREGKEEYRKAAHEILAFILDKQVDKREGSEWFEMLKEDGTPCHKPMVREWKCPYHNGRMCLEILKSGIEIG.

It belongs to the cellobiose 2-epimerase family.

It catalyses the reaction D-cellobiose = beta-D-glucosyl-(1-&gt;4)-D-mannopyranose. In terms of biological role, catalyzes the reversible epimerization of cellobiose to 4-O-beta-D-glucopyranosyl-D-mannose (Glc-Man). Can also epimerize lactose to epilactose. This Eubacterium cellulosolvens protein is Cellobiose 2-epimerase (ce13).